Consider the following 943-residue polypeptide: Isoleucine--tRNA ligase (943 aa).

Positions P58 to H68 match the 'HIGH' region motif. E567 lines the L-isoleucyl-5'-AMP pocket. Positions K608 to S612 match the 'KMSKS' region motif. Residue K611 coordinates ATP. Zn(2+) contacts are provided by C906, C909, C926, and C929.

Belongs to the class-I aminoacyl-tRNA synthetase family. IleS type 1 subfamily. As to quaternary structure, monomer. Requires Zn(2+) as cofactor.

The protein localises to the cytoplasm. The catalysed reaction is tRNA(Ile) + L-isoleucine + ATP = L-isoleucyl-tRNA(Ile) + AMP + diphosphate. Its function is as follows. Catalyzes the attachment of isoleucine to tRNA(Ile). As IleRS can inadvertently accommodate and process structurally similar amino acids such as valine, to avoid such errors it has two additional distinct tRNA(Ile)-dependent editing activities. One activity is designated as 'pretransfer' editing and involves the hydrolysis of activated Val-AMP. The other activity is designated 'posttransfer' editing and involves deacylation of mischarged Val-tRNA(Ile). This chain is Isoleucine--tRNA ligase, found in Pseudomonas aeruginosa (strain ATCC 15692 / DSM 22644 / CIP 104116 / JCM 14847 / LMG 12228 / 1C / PRS 101 / PAO1).